The chain runs to 436 residues: 4-hydroxyphenylpyruvate dioxygenase (436 aa).

VOC domains are found at residues 38–194 (RFHH…GFEV) and 210–370 (RLDH…IFTK). Fe cation-binding residues include histidine 213, histidine 295, and glutamate 381.

The protein belongs to the 4HPPD family. It depends on Fe cation as a cofactor.

The protein resides in the cytoplasm. The enzyme catalyses 3-(4-hydroxyphenyl)pyruvate + O2 = homogentisate + CO2. The protein operates within amino-acid degradation; L-phenylalanine degradation; acetoacetate and fumarate from L-phenylalanine: step 3/6. It functions in the pathway cofactor biosynthesis; prenylquinone biosynthesis. This chain is 4-hydroxyphenylpyruvate dioxygenase, found in Plectranthus scutellarioides (Coleus).